The chain runs to 551 residues: Glucose-6-phosphate isomerase (551 aa).

The active-site Proton donor is the Glu349. Active-site residues include His378 and Lys480.

It belongs to the GPI family.

The protein resides in the cytoplasm. It catalyses the reaction alpha-D-glucose 6-phosphate = beta-D-fructose 6-phosphate. It functions in the pathway carbohydrate biosynthesis; gluconeogenesis. It participates in carbohydrate degradation; glycolysis; D-glyceraldehyde 3-phosphate and glycerone phosphate from D-glucose: step 2/4. Catalyzes the reversible isomerization of glucose-6-phosphate to fructose-6-phosphate. The sequence is that of Glucose-6-phosphate isomerase from Parasynechococcus marenigrum (strain WH8102).